Here is a 106-residue protein sequence, read N- to C-terminus: SH3 domain-binding glutamic acid-rich-like protein 2 (106 aa).

Positions 61 to 67 (QGNPLPP) match the SH3-binding motif.

This sequence belongs to the SH3BGR family.

It localises to the nucleus. This chain is SH3 domain-binding glutamic acid-rich-like protein 2 (sh3bgrl2), found in Xenopus tropicalis (Western clawed frog).